A 65-amino-acid chain; its full sequence is Large ribosomal subunit protein bL33 (65 aa).

Residues 20-40 (VPPSEKRSPGVSRYTTEKNRR) form a disordered region.

It belongs to the bacterial ribosomal protein bL33 family.

In Prochlorococcus marinus (strain MIT 9211), this protein is Large ribosomal subunit protein bL33.